The chain runs to 156 residues: 6,7-dimethyl-8-ribityllumazine synthase (156 aa).

Residues Trp-33, 64-66, and 86-88 each bind 5-amino-6-(D-ribitylamino)uracil; these read SVE and VIL. (2S)-2-hydroxy-3-oxobutyl phosphate is bound at residue 91–92; sequence ET. Catalysis depends on His-94, which acts as the Proton donor. Ile-119 is a 5-amino-6-(D-ribitylamino)uracil binding site. Arg-133 is a binding site for (2S)-2-hydroxy-3-oxobutyl phosphate.

Belongs to the DMRL synthase family.

The catalysed reaction is (2S)-2-hydroxy-3-oxobutyl phosphate + 5-amino-6-(D-ribitylamino)uracil = 6,7-dimethyl-8-(1-D-ribityl)lumazine + phosphate + 2 H2O + H(+). It functions in the pathway cofactor biosynthesis; riboflavin biosynthesis; riboflavin from 2-hydroxy-3-oxobutyl phosphate and 5-amino-6-(D-ribitylamino)uracil: step 1/2. Functionally, catalyzes the formation of 6,7-dimethyl-8-ribityllumazine by condensation of 5-amino-6-(D-ribitylamino)uracil with 3,4-dihydroxy-2-butanone 4-phosphate. This is the penultimate step in the biosynthesis of riboflavin. The sequence is that of 6,7-dimethyl-8-ribityllumazine synthase from Tropheryma whipplei (strain TW08/27) (Whipple's bacillus).